Reading from the N-terminus, the 301-residue chain is Probable actin-related protein 2/3 complex subunit 2 (301 aa).

It belongs to the ARPC2 family. In terms of assembly, component of the Arp2/3 complex, at least composed of arx-1, arx-2, arx-4 and arx-6.

It is found in the cytoplasm. It localises to the cytoskeleton. In terms of biological role, functions as actin-binding component of the Arp2/3 complex which is involved in regulation of actin polymerization and together with an activating nucleation-promoting factor (NPF) mediates the formation of branched actin networks. Seems to contact the mother actin filament. Plays a role in time-dependent memory loss and the retention of conditioned behavior over time. The sequence is that of Probable actin-related protein 2/3 complex subunit 2 from Caenorhabditis elegans.